The sequence spans 513 residues: ATP synthase subunit alpha 1 (513 aa).

Position 169–176 (Gly-169–Thr-176) interacts with ATP.

Belongs to the ATPase alpha/beta chains family. F-type ATPases have 2 components, CF(1) - the catalytic core - and CF(0) - the membrane proton channel. CF(1) has five subunits: alpha(3), beta(3), gamma(1), delta(1), epsilon(1). CF(0) has three main subunits: a(1), b(2) and c(9-12). The alpha and beta chains form an alternating ring which encloses part of the gamma chain. CF(1) is attached to CF(0) by a central stalk formed by the gamma and epsilon chains, while a peripheral stalk is formed by the delta and b chains.

The protein localises to the cell inner membrane. The catalysed reaction is ATP + H2O + 4 H(+)(in) = ADP + phosphate + 5 H(+)(out). Functionally, produces ATP from ADP in the presence of a proton gradient across the membrane. The alpha chain is a regulatory subunit. The protein is ATP synthase subunit alpha 1 of Burkholderia thailandensis (strain ATCC 700388 / DSM 13276 / CCUG 48851 / CIP 106301 / E264).